The primary structure comprises 186 residues: Putative glutathione-dependent formaldehyde-activating enzyme (186 aa).

The 147-residue stretch at 20 to 166 folds into the CENP-V/GFA domain; that stretch reads FSGGKLRCKC…FKSIGLETYD (147 aa). Zn(2+) is bound by residues C27, C29, C48, C50, C53, C95, and C98.

This sequence belongs to the Gfa family. It depends on Zn(2+) as a cofactor.

The enzyme catalyses S-(hydroxymethyl)glutathione = glutathione + formaldehyde. It functions in the pathway one-carbon metabolism; formaldehyde degradation; formate from formaldehyde (glutathione route): step 1/3. Catalyzes the condensation of formaldehyde and glutathione to S-hydroxymethylglutathione. The polypeptide is Putative glutathione-dependent formaldehyde-activating enzyme (Fusarium vanettenii (strain ATCC MYA-4622 / CBS 123669 / FGSC 9596 / NRRL 45880 / 77-13-4) (Fusarium solani subsp. pisi)).